Reading from the N-terminus, the 488-residue chain is N-succinylglutamate 5-semialdehyde dehydrogenase (488 aa).

221 to 226 (GSSRTG) is an NAD(+) binding site. Active-site residues include Glu244 and Cys278.

It belongs to the aldehyde dehydrogenase family. AstD subfamily.

The enzyme catalyses N-succinyl-L-glutamate 5-semialdehyde + NAD(+) + H2O = N-succinyl-L-glutamate + NADH + 2 H(+). It participates in amino-acid degradation; L-arginine degradation via AST pathway; L-glutamate and succinate from L-arginine: step 4/5. In terms of biological role, catalyzes the NAD-dependent reduction of succinylglutamate semialdehyde into succinylglutamate. The chain is N-succinylglutamate 5-semialdehyde dehydrogenase from Pseudomonas syringae pv. tomato (strain ATCC BAA-871 / DC3000).